Reading from the N-terminus, the 382-residue chain is Na(+)/H(+) antiporter NhaA 2 (382 aa).

The next 11 membrane-spanning stretches (helical) occupy residues 7–27 (MALSETFPGILLIFFTFLALL), 58–78 (LDLWINDGLIAIFFLCIGLEL), 94–114 (SLPIFGALGGMITPALIFAAI), 124–144 (GWAIPTATDIAFAVGILMLLG), 153–173 (LFLLSLAIFDDLGAIVIIALF), 178–198 (LSALAIIICLFCIFALLLLNY), 199–219 (YHITHLSLYVLVGVVLWIAML), 255–275 (NPWVVYFILPLFAFANAGIDI), 291–311 (IILGLFLGKQLGVFIFCFIAI), 327–347 (FYGICILTGIGFTMSLFIDGL), and 361–381 (LAILIASFLSAIVGFIYLKIV).

It belongs to the NhaA Na(+)/H(+) (TC 2.A.33) antiporter family.

The protein resides in the cell inner membrane. The catalysed reaction is Na(+)(in) + 2 H(+)(out) = Na(+)(out) + 2 H(+)(in). Na(+)/H(+) antiporter that extrudes sodium in exchange for external protons. This is Na(+)/H(+) antiporter NhaA 2 from Campylobacter jejuni subsp. doylei (strain ATCC BAA-1458 / RM4099 / 269.97).